A 189-amino-acid chain; its full sequence is Apolipoprotein D (189 aa).

An N-terminal signal peptide occupies residues 1–20; the sequence is MVMLLLLLSALAGLFGAAEG. Gln21 is subject to Pyrrolidone carboxylic acid. 2 cysteine pairs are disulfide-bonded: Cys28–Cys134 and Cys61–Cys185. Asn65 and Asn98 each carry an N-linked (GlcNAc...) (complex) asparagine glycan.

The protein belongs to the calycin superfamily. Lipocalin family. Homodimer. In plasma, also exists as a disulfide-linked heterodimer with APOA2. Post-translationally, N-glycosylated. N-glycan heterogeneity at Asn-65: Hex5HexNAc4 (major) and Hex6HexNAc5 (minor); at Asn-98: Hex5HexNAc4 (minor), dHex1Hex5HexNAc4 (major), dHex1Hex6HexNAc5 (minor) and dHex1Hex7HexNAc6 (minor). In terms of tissue distribution, expressed in liver, intestine, pancreas, kidney, placenta, adrenal, spleen, fetal brain tissue and tears.

It is found in the secreted. APOD occurs in the macromolecular complex with lecithin-cholesterol acyltransferase. It is probably involved in the transport and binding of bilin. Appears to be able to transport a variety of ligands in a number of different contexts. The protein is Apolipoprotein D (APOD) of Homo sapiens (Human).